The following is a 301-amino-acid chain: GTPase Era (301 aa).

The region spanning 6–173 (KSGFVAIVGR…LEQTNANLEI (168 aa)) is the Era-type G domain. Residues 14–21 (GRPNVGKS) form a G1 region. A GTP-binding site is contributed by 14-21 (GRPNVGKS). Residues 40-44 (QTTRN) are G2. Residues 61 to 64 (DTPG) are G3. GTP contacts are provided by residues 61 to 65 (DTPGI) and 123 to 126 (NKID). Residues 123–126 (NKID) form a G4 region. Positions 152 to 154 (ISA) are G5. The region spanning 204 to 282 (TREEVPHSVA…FLEVWVKVQK (79 aa)) is the KH type-2 domain.

This sequence belongs to the TRAFAC class TrmE-Era-EngA-EngB-Septin-like GTPase superfamily. Era GTPase family. In terms of assembly, monomer.

It is found in the cytoplasm. The protein resides in the cell membrane. Functionally, an essential GTPase that binds both GDP and GTP, with rapid nucleotide exchange. Plays a role in 16S rRNA processing and 30S ribosomal subunit biogenesis and possibly also in cell cycle regulation and energy metabolism. This Listeria monocytogenes serotype 4a (strain HCC23) protein is GTPase Era.